The sequence spans 560 residues: 2-isopropylmalate synthase (560 aa).

Residues 30–303 (PVWCSVDLRD…DPEIDCSNIE (274 aa)) form the Pyruvate carboxyltransferase domain. Positions 39, 242, 244, and 278 each coordinate Mg(2+). Positions 437–560 (QPEGRLRFVD…RVLDVKAGKA (124 aa)) are regulatory domain.

Belongs to the alpha-IPM synthase/homocitrate synthase family. LeuA type 2 subfamily. Homodimer. The cofactor is Mg(2+).

Its subcellular location is the cytoplasm. It catalyses the reaction 3-methyl-2-oxobutanoate + acetyl-CoA + H2O = (2S)-2-isopropylmalate + CoA + H(+). Its pathway is amino-acid biosynthesis; L-leucine biosynthesis; L-leucine from 3-methyl-2-oxobutanoate: step 1/4. Its function is as follows. Catalyzes the condensation of the acetyl group of acetyl-CoA with 3-methyl-2-oxobutanoate (2-ketoisovalerate) to form 3-carboxy-3-hydroxy-4-methylpentanoate (2-isopropylmalate). This Rhizobium johnstonii (strain DSM 114642 / LMG 32736 / 3841) (Rhizobium leguminosarum bv. viciae) protein is 2-isopropylmalate synthase.